A 1136-amino-acid polypeptide reads, in one-letter code: Receptor-type guanylate cyclase gcy-4 (1136 aa).

Positions 1–21 are cleaved as a signal peptide; it reads MRQLNYYIFISTILTYNLTHG. Residues 22 to 485 are Extracellular-facing; the sequence is QGPRPVIRVG…CPLPIFEQYR (464 aa). Residues N40, N194, N252, N351, N377, N386, and N438 are each glycosylated (N-linked (GlcNAc...) asparagine). A helical membrane pass occupies residues 486–506; it reads ALVIVAIAVTILILLAIIICM. The Cytoplasmic segment spans residues 507–1136; that stretch reads SSKIRNRRVE…LRREMMRVEV (630 aa). In terms of domain architecture, Protein kinase spans 533 to 833; it reads LPMHRRASKS…EDNLMDHVFS (301 aa). The segment at 536–565 is disordered; that stretch reads HRRASKSSQESETESASETENFTSKSGDTM. The Guanylate cyclase domain maps to 891 to 1021; sequence TVFFSDLVKF…DTVNTASRME (131 aa).

Belongs to the adenylyl cyclase class-4/guanylyl cyclase family. Expression is biased toward ASE right (ASER) sensory neuron.

Its subcellular location is the cell membrane. The catalysed reaction is GTP = 3',5'-cyclic GMP + diphosphate. In terms of biological role, guanylate cyclase involved in the production of the second messenger cGMP. Regulates chemotaxis responses toward Br(1-) and I(1-) salt ions in ASE right (ASER) sensory neuron. The chain is Receptor-type guanylate cyclase gcy-4 from Caenorhabditis elegans.